Reading from the N-terminus, the 256-residue chain is Indole-3-glycerol phosphate synthase (256 aa).

It belongs to the TrpC family.

It catalyses the reaction 1-(2-carboxyphenylamino)-1-deoxy-D-ribulose 5-phosphate + H(+) = (1S,2R)-1-C-(indol-3-yl)glycerol 3-phosphate + CO2 + H2O. Its pathway is amino-acid biosynthesis; L-tryptophan biosynthesis; L-tryptophan from chorismate: step 4/5. This is Indole-3-glycerol phosphate synthase from Chlorobaculum tepidum (strain ATCC 49652 / DSM 12025 / NBRC 103806 / TLS) (Chlorobium tepidum).